Consider the following 99-residue polypeptide: UPF0235 protein ASA_3628 (99 aa).

The protein belongs to the UPF0235 family.

The protein is UPF0235 protein ASA_3628 of Aeromonas salmonicida (strain A449).